Here is a 357-residue protein sequence, read N- to C-terminus: DNA replication and repair protein RecF (357 aa).

Position 30–37 (30–37 (GANGSGKT)) interacts with ATP.

It belongs to the RecF family.

The protein localises to the cytoplasm. The RecF protein is involved in DNA metabolism; it is required for DNA replication and normal SOS inducibility. RecF binds preferentially to single-stranded, linear DNA. It also seems to bind ATP. The polypeptide is DNA replication and repair protein RecF (Escherichia coli O139:H28 (strain E24377A / ETEC)).